The primary structure comprises 375 residues: V-type proton ATPase subunit C (375 aa).

This sequence belongs to the V-ATPase C subunit family. As to quaternary structure, V-ATPase is a heteromultimeric enzyme composed of a peripheral catalytic V1 complex (components A to H) attached to an integral membrane V0 proton pore complex (components: a, c, c'', d and e). Phosphorylated on Ser/Thr residues by WNK8.

Its subcellular location is the vacuole membrane. Subunit of the peripheral V1 complex of vacuolar ATPase. Subunit C is necessary for the assembly of the catalytic sector of the enzyme and is likely to have a specific function in its catalytic activity. V-ATPase is responsible for acidifying a variety of intracellular compartments in eukaryotic cells. The sequence is that of V-type proton ATPase subunit C (VHA-C) from Arabidopsis thaliana (Mouse-ear cress).